Consider the following 78-residue polypeptide: Small ribosomal subunit protein bS20 (78 aa).

The protein belongs to the bacterial ribosomal protein bS20 family.

Functionally, binds directly to 16S ribosomal RNA. The protein is Small ribosomal subunit protein bS20 of Streptococcus pneumoniae serotype 2 (strain D39 / NCTC 7466).